Consider the following 656-residue polypeptide: Chaperone protein HtpG (656 aa).

Residues 1–364 (MSEQNPTDSK…SADLPLNVSR (364 aa)) form an a; substrate-binding region. Residues 365–583 (EILQESRDVK…EGELSPQMIQ (219 aa)) are b. Residues 584 to 656 (MLKQMGQDVP…LRRVNELLMK (73 aa)) form a c region.

It belongs to the heat shock protein 90 family. As to quaternary structure, homodimer.

It localises to the cytoplasm. Molecular chaperone. Has ATPase activity. This Psychrobacter arcticus (strain DSM 17307 / VKM B-2377 / 273-4) protein is Chaperone protein HtpG.